Reading from the N-terminus, the 347-residue chain is GMP reductase (347 aa).

Residue 108-131 (ADFEKTKQILDLNSALNFVCIDVA) participates in NADP(+) binding. Residues G181 and G183 each contribute to the K(+) site. The Thioimidate intermediate role is filled by C186. 216–239 (IVSDGGCTTPGDVAKAFGGGADFV) serves as a coordination point for NADP(+).

The protein belongs to the IMPDH/GMPR family. GuaC type 1 subfamily. As to quaternary structure, homotetramer.

It catalyses the reaction IMP + NH4(+) + NADP(+) = GMP + NADPH + 2 H(+). Its function is as follows. Catalyzes the irreversible NADPH-dependent deamination of GMP to IMP. It functions in the conversion of nucleobase, nucleoside and nucleotide derivatives of G to A nucleotides, and in maintaining the intracellular balance of A and G nucleotides. This is GMP reductase from Escherichia coli O81 (strain ED1a).